The sequence spans 4250 residues: MEECNKEGPSSSSQGPGYCPVKVPESHDLEKILQESNYHPERNPLNPDPKTPPLPLTDLRQPRKSPLTGTDKKYPLMKQRGFYSDILSPGTLDKLGNVCCGPYMSQNLIRQADLDKFTPKVDSFVIPEDFQERVEQQIIGATTRLLTQTDFPLQSYEPKVQVPFQVLPGQCPRKIEIERRKQQYLRLDIEQLLTSEGIDSNKLMPRHPDLQHPQTIEQGRDPLFPIYLPLKVFDNEEFDCRTPTEWLNMGLEPGSQNRKPVPGKALLPTDDDLGHEDPKNQELDYRWCEVGVLDYDEEKKLYLVQKTDKRGLVRDEMGMPILNGGITPAGRPPLLATQYWVPRIQLLFCAEDPRVFTQRVVQANALRKYTEALLMYNLYVDCMPTEGRRVINEQSLSKIKQWALSTPRMRKGQSVLEHLSCLAREVNLDYERSMNKINFDQIVSSNPETFSYVTLPEKEEEKVPNQGLVSVPEYPFREQKEDFTFVSLLTRPEVITALSKVRAECNKVTSMSLFHSSLSKYSRLEEFEQIQSQTFSQVQMFLKDSWISTLKVAMRGSLRDMSKGWYNLYETNWEVYLMSKLRKLMELIKYMLQDTLRFLVQDSLGSFTQFIGDACCSVLECVDDMDWGEDLVNSPYKPRKNPLFIVDLVLDNSGVHYSTPLEHFEMILLNLFDKGILATHAVPQLEKLVMEDIFISGDPLLESVGLHEPLVEELRANITNAMHKAMMPLQAYAKEYRKYLELNNNDISTFLKTYQTQCPSAEEVREVVITHLKEKEILDNSLPSSIIIGPFYINVDNVKQSLSKKRKALATSMLDILAKNLHKEVDSICEEFRSISRKIYEKPNSIEELAELRDWMKGIPEKLVFLEERIVKVMSDYEVMDEFFYNLTTDDFNDKWAANNWPSKILGQIDMVRQQHVEDEEKFRKIQLMDQNNFQEKLEGLQLVVAGFSIHVEIARAHEIANEVRRVKKQLKDCQQLAMLYNNRERIFGLPITNYDKLSRMVKEFQPYLDLWTTASDWLRWSESWMNDPLSAIDAEQLEKNVIESFKTMHKCVKQFKDIPACQEVALDIRTRIEEFKPYIPLIQGLRNPGMRNRHWEVLSNEININVRPKANLTFARCLEMNLQDHIESISKVAEVAGKEYAIEQALDKMEKEWSSILFNVLPYKETDTYILKSPDEASQLLDDHIVMTQSMSFSPYKKPFEQRINSWETKLKLTQEVLEEWLNCQRAWLYLEPIFSSEDITRQLPVESKRYQTMERIWRKIMKNAYENREVINVCSDQRLLDSLRDCNKLLDLVQKGLSEYLETKRTAFPRFYFLSDDELLEILSQTKDPTAVQPHLRKCFENIARLLFQEDLEITHMYSAEGEEVKLSFSIYPSSNVEDWLLEVERSMKASVHDIIEMAIKAYPTMLRTEWVLNWPGQVTIAGCQTYWTMEVAEALEAGNISSKLFPQLSKQLSDLVALVRGKLSRMQRMVLSALIVIEVHAKDVVSKLIDENVVSVHDFEWISQLRYYWTKDDLYIRAVNAEFIYGYEYLGNSGRLVITPLTDRCYLTLTGALHLKFGGAPAGPAGTGKTETTKDLGKALAIQTVVFNCSDQLDFMAMGKFFKGLASAGAWACFDEFNRIDIEVLSVVAQQITTIQKAQQQRVERFMFEGVEIPLVPSCAVFITMNPGYAGRTELPDNLKALFRPVAMMVPDYAMIAEISLYSFGFNEANVLAKKITTTFKLSSEQLSSQDHYDFGMRAVKTVISAAGNLKRENPTMNEELICLRAIRDVNVPKFLQEDLKLFSGIVSDLFPTIKEEETDYGILDQAIRRSCEKNNLKDVEGFLIKCIQLYETTVVRHGLMLVGPTGSGKSNCYRVLAAAMTLLKGKPSISGGVYEAVNYYVLNPKSITMGQLYGEFDLLTHEWTDGIFSSLIRAGAIASDTNKKWYMFDGPVDAVWIENMNTVLDDNKKLCLSSGEIIKLTEAMTMMFEVQDLAVASPATVSRCGMVYLEPSILGLMPFVECWLKRLPAIIKPYEEQFKSLFTKYLENSINFVRNTVKEVIASTNSNLTMSLLKLLDCFFRPFLPREGLKKIPSEKLSHIPELIEPWFIFSLVWSVGATGDHTSRISFSQWLRLKMRLEQVKLGFPEDGLVYDYRLDDAGISSTEDDDEEEDENKQVSWVKWMDYSAPFTMMPDTNYCNIIVPTMDTVQMSYLLGMLLTNHKPVLCIGPTGTGKTLTVSNKLLKYLPLEYISHFLTFSARTSANQTQDLIDSKLDKRRKGVFGPPLGRNFIFFIDDLNMPALETYGAQPPIELLRQWMDHGGWYDRKVIGAFKNLVDINFVCAMGPPGGGRNAITPRLTRHFNYLSFIEMDEVSKKRIFSIILECWMDGLLGEKSYREPVPGAPNIDDLTEPLVDATINVYGIITSQLLPTPAKSHYTFNLRDLSKVFQGMLMAEPSKVEDKVQLLRLWYHENCRVFRDRLVNEEDRSWFDELLEAQMEEFGVAFNKVCPFQPILYGDFMSPGSDVKSYELITSESKMMQVIEEYMEDYNQINTAKLRLVLFVDAMSHICRISRTLRQALGNALLLGVGGSGRSSLTRLASHMAEYECFQIELSKNYGMSEWREDVKKVLLKAGLQNLPITFLFSDTQIKNESFLEDINNVLNSGDIPNIYSADEQDQIINTMRPYIQEQGLQPTKANLMAAYTGRVRSNIHMVLCMSPIGEVFRARLRQFPSLVNCCTIDWFNEWPAEALKSVATTFLSEIPELECSEEVIQGLIQVCVFIHQSVASKCVEYLAELARHNYVTPKSYLELLNIFSILIGQKKMELKTAKNRMKSGLDKLLRTSEDVAKMQEELEIMRPLLEEAAKDTMLTMEQIKVDTAIAEETRKSVQAEEIKANEKANKAQAIADDAQKDLDEALPALDAALASLRNLNKNDVTEVRAMQRPPPGVKLVIEAVCIMKGIKPKKVPGEKPGSKVDDYWEPGKGLLQDPGRFLESLFKFDKDNIGEAVIKAIQPYIDNEEFQPAAIAKVSKACTSICQWVRAMHKYHFVAKAVEPKRQALREAQDDLEVTQRILEEAKHHLHEVEDGIATMQAKYRECVAKKEELEMKCEQCEQRLGRADKLINGLADEKVRWQETVENLENMLDNIFGDVLVAAGFVAYLGPFTGQYRTTLYEYWVNQLTVHHVPHTSKPTLITTLGNPVKIRSWQIAGLPNDTLSVENGVINQFSQRWTHFIDPQGQANKWIKNMERESGLDVFKLSDRDFLRSMENAIRFGKPCLLENVGEELDPALEPVLLKQTYKQQGNIVLKLGDTVIPYHEDFRMYITTKLPNPHYSPEISTKLTLINFTLSPSGLEDQLLGQVVAEERPDLEEAKNQLIVSNAKMRQELKDIEDQILYRLSSSEGNPVDDMELIKVLEASKMKAAEIQAKVRIAEQTEKDIDLTRMEYIPVAVRTQILFFCVSDLANVDPMYQYSLEWFLNIFLSGIANSERADNLKKRIVNINRYLTFSLYSNVCRSLFEKHKLMFAFLLCVRIMMNEGKINQAEWRYLLSGGSIQTMFENPAPQWLSDRAWRDILALSNLPTFATFSNDFVMYLSEFQAIFDSAEPHRELLPGIWNAYLDEFQKLLILRCLRGDKVTNAMQDFVATHLEPRFIEPQTANLSAVFKESNSTTPLIFVLSPGTDPAADLYKFAEEMKFSKKFSAISLGQGQGPRAEAMMRNSIERGKWVFFQNCHLAPSWMPALERLIEHINPDKVHRDFRLWLTSLPSNKFPVSILQNGSKMTIEPPRGVKANLLKSYNSLSDDFLHSCQKVVEFKSLLLSLCLFHGNALERRKFGPLGFNIPYEFTDGDLRICISQLKMFLDEYEDIPYKVLKYTAGEINYGGRVTDDWDRRCVMNILEDFYNPAVLSSEHSYSNSGIYHQIPPTYDLNGYLSYIKSLPLNDMPEIFGLHDNANITFAQNETFALFNAILQLQPKSSSMGGQSREELVEDVAENILLQVPGPIELQEVTKKFPVLYEESMNTVLVQEVIRYNKLLEVITQTLSDMLKAIKGLVVMSLELELMSISLYNNTVPELWKSKAYPSLKPLASWIMDLLLRLDFMHSWINDGIPPVFWISGFFFPQAFLTGTLQNFARKFVISIDTITFDFKVLPEASSEIKERPQTGCYIHGLFLEGARWDSMNFQLAESRPKELYTEMAVIWLLPEANRKVQNQDFYLCPIYKTLTRAGTLSTTGHSTNYVIAVEIPSNQPQRHWIKRGVALICALDY.

The tract at residues 1–73 (MEECNKEGPS…KSPLTGTDKK (73 aa)) is disordered. The interval 1–1527 (MEECNKEGPS…YIRAVNAEFI (1527 aa)) is stem. The segment covering 24–42 (PESHDLEKILQESNYHPER) has biased composition (basic and acidic residues). The span at 46–55 (NPDPKTPPLP) shows a compositional bias: pro residues. 4 AAA regions span residues 1528-1749 (YGYE…VISA), 1809-2042 (QAIR…NTVK), 2174-2434 (TMMP…VFQG), and 2532-2784 (DYNQ…LARH). The GPAGTGKT motif motif lies at 1566-1573 (GPAGTGKT). 1566 to 1573 (GPAGTGKT) provides a ligand contact to ATP. Residues 1616–1622 (CFDEFNR) carry the CFDEFNR motif motif. ATP is bound by residues 1847 to 1854 (GPTGSGKS), 2212 to 2219 (GPTGTGKT), and 2571 to 2578 (GVGGSGRS). Residues 2799-3097 (FSILIGQKKM…EELEMKCEQC (299 aa)) form a stalk region. The stretch at 3045-3128 (LREAQDDLEV…QETVENLENM (84 aa)) forms a coiled coil. AAA stretches follow at residues 3182–3412 (LGNP…EIQA) and 3625–3844 (MQDF…QLKM).

The protein belongs to the dynein heavy chain family. In terms of assembly, consists of at least two heavy chains and a number of intermediate and light chains.

Its subcellular location is the cytoplasm. It is found in the cytoskeleton. The protein localises to the cilium axoneme. The protein resides in the cell projection. It localises to the cilium. Its subcellular location is the flagellum. Functionally, force generating protein of cilia required for sperm flagellum motility. Produces force towards the minus ends of microtubules. Dynein has ATPase activity; the force-producing power stroke is thought to occur on release of ADP. Required in spermatozoa for the formation of the inner dynein arms and biogenesis of the axoneme. The sequence is that of Dynein axonemal heavy chain 1 from Mus musculus (Mouse).